The sequence spans 328 residues: Cytochrome c biogenesis protein CcsA (328 aa).

8 helical membrane passes run 13-33 (ISFS…LVNL), 46-66 (GIII…IYSG), 73-93 (LYES…VSYF), 101-121 (LNAI…SGLL), 146-166 (MILG…LLVI), 234-254 (IISL…VWAN), 263-283 (WDPK…YLHI), and 295-315 (AIVA…VNLL).

This sequence belongs to the CcmF/CycK/Ccl1/NrfE/CcsA family. In terms of assembly, may interact with Ccs1.

The protein localises to the plastid. The protein resides in the chloroplast thylakoid membrane. Its function is as follows. Required during biogenesis of c-type cytochromes (cytochrome c6 and cytochrome f) at the step of heme attachment. The protein is Cytochrome c biogenesis protein CcsA of Capsella bursa-pastoris (Shepherd's purse).